The primary structure comprises 125 residues: Large ribosomal subunit protein bL20 (125 aa).

The protein belongs to the bacterial ribosomal protein bL20 family.

Functionally, binds directly to 23S ribosomal RNA and is necessary for the in vitro assembly process of the 50S ribosomal subunit. It is not involved in the protein synthesizing functions of that subunit. The polypeptide is Large ribosomal subunit protein bL20 (Methylobacterium radiotolerans (strain ATCC 27329 / DSM 1819 / JCM 2831 / NBRC 15690 / NCIMB 10815 / 0-1)).